Reading from the N-terminus, the 406-residue chain is MPKKFTTRKGDIYTIDTPNEENLFKSVINKNTSEAFRYISQFNFPLSDNIKTIRYFAIDEDKPNNVGTSHSTLSLIAVINNDLETLNLLINFGFDINNHSGINYITPLGLAADKGYKEIVKLLCEQDDIKVQNALYYAIRGENKSIEIIDLLVQKGAIIKPEHIELAISHSNLSVFEYLFEKKLPDIEKNNLKLIGSSPAISSIDCILGEASKYQNTEVIKFLLSSGYKPEQKYIDEFFVSAADNGRLKTCITLKANIEEHTRLEGLSKYQNYLKDKYHDYYKTHIIFLSKFSYTDEPVEMFMFDNESNLLLLSMSRPLRSKLSSKDSYIIHDAIKEIFNNTHLNIKELELARFKARIEFIKITTDEDLVPLSNKLAPLFSPELIHDLSKLEEELFPEVKLAGLAD.

ANK repeat units lie at residues Thr-68 to Asn-98, Asn-103 to Ile-129, Lys-130 to Pro-161, His-163 to Lys-189, and Ser-203 to Gln-232.

This Rickettsia felis (strain ATCC VR-1525 / URRWXCal2) (Rickettsia azadi) protein is Putative ankyrin repeat protein RF_0266.